Consider the following 1280-residue polypeptide: MAASSNDASKSAMANSNVTTEVAQTPSKEQDVNGEVEATEEDGANGQLPDNIFQIKIKLPHEPFEIPMTISTAEQVQDLRQSIIEMPNTFQYSCFHLEHKGQRINDFVDLSEVPELGPDSVLEVKEDPYNEKEARLHVIRVRELIGAAGDRTDALHGIMAGLSLHDTVGLDQSGKPKEDGPEQSPLADYDFKSSGAIKNLLPPPQEPAPKCIKSIALSAWNPPPYHLRTKGHLLYLVAMTNENEQHHITSHVTGFYVNKSSNASFDPAPRQGPKALHAHSLLTLLEKLSPSFEASFQQLLEHNAKKELLTIFQLSNAIPANPWLVPPPTSSLTTHQPDLARTQESYLISGVENTDTLRDWNEEFQSTREMPKEAVHDRVFRERLTSKLFADYNDAATRGAMLVARGEIAPLNPTEAKDAQIFVYNNIFYSFGADGVGTFGTEGGDEAARVAVGKDVIGVRAVNNLDIPNLFTSGTVVVDFLGKRIVGQSIVPGIFKQRDPGEHQIDYGAVEGKEIVADDKSFVPLFEQLSKALRVKKHPVWDKDNVRHELEGSVETKGLIGTDGRRYALDLYRLTPLDVAWIEAHWSEPSKDEDAKPSEKNYPHRMATLRPELVESYGRLKLREYVKNEIDKKANKARGGRRRLPKAQKKADAGKEVDGEKKAEAEPEQDRVDISGFSFALNPDVFSGQTPQSDEDKAEWAKDEAEVRAACDHLQTEVIPRMITELKDGEVGFPMDGQSLSSLLHKRGVNIRYLGKIAELSDKPDPRLQALKRLIVQEMIARGFKHFANSKLRNVSAPFSAACVAHLLNCLLGADANAKPVAECDEEIKRMISTPEDDFSFEKLTPESLKKEVIAQIALRYRYDLGESWVESGKELQLLREVSLKLGLQLQTRQYGFTKETLTNGAAVPTPAAPQTNGSSTSSKKKKNKTITPPRADSPAVSLPSQTFHADDILNIVPVIKEASPKSLLAEEALEAGRMSVAQDQKELGQELLLESLQLHEQIYGVLHPEVARAYHTLSNLLFNLDDKASALELAHKAVIVSERTLGVDHADTVLAYLNLGLFEHASGNTKAALVYVRHALELWKIIYGADHPDSITTLNNAAVMLQAMKQYHESRIWFEASLAICEDVSGKTSINTATLLFQTAQALALDKDMRGAVNRMRESYNIFKDVLGAEDRNTKEAESWLEQLTQSAVSQAKQLNDLAKGRIRRIQLTGRNPLRPAAATPSVSDAAAAAGGQRTGTGRVDQRKIEDLLKYIEGESSKTPTKKRTQNPRKRTQKP.

Polar residues predominate over residues 1-27; the sequence is MAASSNDASKSAMANSNVTTEVAQTPS. 2 disordered regions span residues 1–49 and 169–189; these read MAAS…GQLP and GLDQSGKPKEDGPEQSPLADY. Residues 32-43 are compositionally biased toward acidic residues; that stretch reads VNGEVEATEEDG. One can recognise a Clu domain in the interval 338–582; sequence DLARTQESYL…RLTPLDVAWI (245 aa). Disordered regions lie at residues 633-669, 905-943, and 1214-1280; these read KANKARGGRRRLPKAQKKADAGKEVDGEKKAEAEPEQ, GAAVPTPAAPQTNGSSTSSKKKKNKTITPPRADSPAVSL, and TGRN…TQKP. The span at 635-648 shows a compositional bias: basic residues; sequence NKARGGRRRLPKAQ. Over residues 649-669 the composition is skewed to basic and acidic residues; sequence KKADAGKEVDGEKKAEAEPEQ. A compositionally biased stretch (low complexity) spans 1221–1235; sequence PAAATPSVSDAAAAA. The span at 1245 to 1261 shows a compositional bias: basic and acidic residues; it reads VDQRKIEDLLKYIEGES. Positions 1265-1280 are enriched in basic residues; it reads PTKKRTQNPRKRTQKP.

The protein belongs to the CLU family. May associate with the eukaryotic translation initiation factor 3 (eIF-3) complex.

Its subcellular location is the cytoplasm. In terms of biological role, mRNA-binding protein involved in proper cytoplasmic distribution of mitochondria. The protein is Clustered mitochondria protein homolog of Phaeosphaeria nodorum (strain SN15 / ATCC MYA-4574 / FGSC 10173) (Glume blotch fungus).